A 192-amino-acid polypeptide reads, in one-letter code: UPF0149 protein VP2588 (192 aa).

Belongs to the UPF0149 family.

The chain is UPF0149 protein VP2588 from Vibrio parahaemolyticus serotype O3:K6 (strain RIMD 2210633).